The following is a 397-amino-acid chain: 2-oxoglutarate and iron-dependent oxygenase domain-containing protein ICU11 (397 aa).

A disordered region spans residues 1-56 (MCNQTPLRSMALDSSGKQPEQQQQQQPRASSGNGEARLKLRRTPNEEHEPENYEDL). Residues 18-27 (QPEQQQQQQP) show a composition bias toward low complexity. Positions 238-339 (SLDSHHGYIV…RANLILWCRS (102 aa)) constitute a Fe2OG dioxygenase domain. His260, Asp262, and His320 together coordinate Fe cation. 2-oxoglutarate is bound at residue Arg330.

Fe(2+) is required as a cofactor. Requires L-ascorbate as cofactor. Expressed in roots, cotyledons, rosette leaves, cauline leaves and inflorescences.

The protein resides in the nucleus. The protein localises to the nucleoplasm. In terms of biological role, participates in the epigenetic repression of flowering genes in association with CP2. Functions in the repression of several members of the MADS-box transcription factors family, including SEP3, during vegetative development via histone modification. This Arabidopsis thaliana (Mouse-ear cress) protein is 2-oxoglutarate and iron-dependent oxygenase domain-containing protein ICU11.